The primary structure comprises 160 residues: Eukaryotic translation initiation factor 5A-3 (160 aa).

The span at 1-12 (MSDEEHHFESKA) shows a compositional bias: basic and acidic residues. A disordered region spans residues 1–21 (MSDEEHHFESKADAGASKTYP). K52 carries the hypusine modification.

It belongs to the eIF-5A family. Post-translationally, lys-52 undergoes hypusination, a unique post-translational modification that consists in the addition of a butylamino group from spermidine to lysine side chain, leading to the formation of the unusual amino acid hypusine. eIF-5As are the only known proteins to undergo this modification, which is essential for their function.

Functionally, translation factor that promotes translation elongation and termination, particularly upon ribosome stalling at specific amino acid sequence contexts. Binds between the exit (E) and peptidyl (P) site of the ribosome and promotes rescue of stalled ribosome: specifically required for efficient translation of polyproline-containing peptides as well as other motifs that stall the ribosome. Acts as a ribosome quality control (RQC) cofactor by joining the RQC complex to facilitate peptidyl transfer during CAT tailing step. In Solanum tuberosum (Potato), this protein is Eukaryotic translation initiation factor 5A-3 (EIF5A3).